The primary structure comprises 468 residues: Argininosuccinate lyase (468 aa).

It belongs to the lyase 1 family. Argininosuccinate lyase subfamily.

It is found in the cytoplasm. The catalysed reaction is 2-(N(omega)-L-arginino)succinate = fumarate + L-arginine. It participates in amino-acid biosynthesis; L-arginine biosynthesis; L-arginine from L-ornithine and carbamoyl phosphate: step 3/3. The protein is Argininosuccinate lyase of Cutibacterium acnes (strain DSM 16379 / KPA171202) (Propionibacterium acnes).